The following is an 885-amino-acid chain: Exosome complex component 10 (885 aa).

Basic and acidic residues predominate over residues 1 to 10 (MAPPSPREHQ). Disordered stretches follow at residues 1-23 (MAPPSPREHQSAPATGATKPDAE) and 210-232 (KPLPQALSKERRERPQDRPEDLD). K19 is covalently cross-linked (Glycyl lysine isopeptide (Lys-Gly) (interchain with G-Cter in SUMO2)). Residues 217–230 (SKERRERPQDRPED) are compositionally biased toward basic and acidic residues. The region spanning 289 to 455 (HVVSSLDELV…YIYDRMRLEL (167 aa)) is the 3'-5' exonuclease domain. Mg(2+) is bound by residues D313, E315, D371, and D440. One can recognise an HRDC domain in the interval 503–583 (NSQQLTAFQL…QQAREMPLLK (81 aa)). Residue K583 forms a Glycyl lysine isopeptide (Lys-Gly) (interchain with G-Cter in SUMO1); alternate linkage. K583 is covalently cross-linked (Glycyl lysine isopeptide (Lys-Gly) (interchain with G-Cter in SUMO2); alternate). K710 is covalently cross-linked (Glycyl lysine isopeptide (Lys-Gly) (interchain with G-Cter in SUMO2)). Residues 730-885 (VQKEPKEAAK…RGFRHNWPKR (156 aa)) form a disordered region. Composition is skewed to basic and acidic residues over residues 732–756 (KEPKEAAKKKVAEQTAAREETKEES) and 776–794 (ATKKRERATSDLRTIEQKQ). S821 carries the phosphoserine modification. Residues K833, K859, and K873 each participate in a glycyl lysine isopeptide (Lys-Gly) (interchain with G-Cter in SUMO2) cross-link.

The protein belongs to the exosome component 10/RRP6 family. Component of the RNA exosome complex. The catalytically inactive RNA exosome core complex (Exo-9) associates with the catalytic subunit EXOSC10/RRP6 (via its N-terminus). Exo-9 may associate with DIS3 to form the nucleolar exosome complex, or DIS3L to form the cytoplasmic exosome complex. The RNA exosome complex interacts with cofactors C1D/RRP47, MPHOSPH6/MPP6 and MTREX/MTR4. Interacts with MTREX; the interaction with MTREX mediates the association of MTREX with nuclear RNA exosomes. Part of the small subunit (SSU) processome, composed of more than 70 proteins and the RNA chaperone small nucleolar RNA (snoRNA) U3. Interacts with ALYREF/THOC4. Interacts with DHX36; this interaction occurs in a RNase-insensitive manner. Interacts with NRDE2. Interacts (via C-terminus) with USP36 (via C-terminus); the interaction is facilitated by the association with RNA and promotes sumoylation of EXOSC10. Requires Mg(2+) as cofactor. In terms of processing, sumoylated by USP36; sumoylation does not significantly affect EXOSC10 nucleolar localization and association with core exosome and USP36, but regulates the nucleolar RNA exosome activity in rRNA processing by promoting binding of EXOSC10 to pre-rRNAs. Effects of sumoylation on EXOSC10 levels vary between different studies. Sumoylation of EXOSC10 is required for the modulation of EXOSC10 effects on cellular protein translation and cell proliferation. Sumoylation is promoted by mild hypothermia. Expressed in testis (at protein level).

The protein localises to the cytoplasm. Its subcellular location is the nucleus. The protein resides in the nucleolus. It localises to the nucleoplasm. Its function is as follows. Catalytic component of the RNA exosome complex which has 3'-&gt;5' exoribonuclease activity and participates in a multitude of cellular RNA processing and degradation events. In the nucleus, the RNA exosome complex is involved in proper maturation of stable RNA species such as rRNA, snRNA and snoRNA, in the elimination of RNA processing by-products and non-coding 'pervasive' transcripts, such as antisense RNA species and promoter-upstream transcripts (PROMPTs), and of mRNAs with processing defects, thereby limiting or excluding their export to the cytoplasm. Part of the small subunit (SSU) processome, first precursor of the small eukaryotic ribosomal subunit. During the assembly of the SSU processome in the nucleolus, many ribosome biogenesis factors, an RNA chaperone and ribosomal proteins associate with the nascent pre-rRNA and work in concert to generate RNA folding, modifications, rearrangements and cleavage as well as targeted degradation of pre-ribosomal RNA by the RNA exosome. The RNA exosome may be involved in Ig class switch recombination (CSR) and/or Ig variable region somatic hypermutation (SHM) by targeting AICDA deamination activity to transcribed dsDNA substrates. In the cytoplasm, the RNA exosome complex is involved in general mRNA turnover and specifically degrades inherently unstable mRNAs containing AU-rich elements (AREs) within their 3' untranslated regions, and in RNA surveillance pathways, preventing translation of aberrant mRNAs. It seems to be involved in degradation of histone mRNA. EXOSC10 is required for nucleolar localization of C1D and probably mediates the association of MTREX, C1D and MPHOSPH6 with the RNA exosome involved in the maturation of 5.8S rRNA. Plays a role in the recruitment of replication protein A complex (RPA) and RAD51 to DNA double-strand breaks caused by irradiation, contributing to DNA repair by homologous recombination. Regulates levels of damage-induced RNAs in order to prevent DNA-RNA hybrid formation at DNA double-strand breaks and limit DNA end resection after damage. Plays a role in oocyte development, maturation and survival. Required for normal testis development and mitotic division of spermatogonia. Plays a role in proper embryo development. Required for global protein translation. Required for cell proliferation. The protein is Exosome complex component 10 of Rattus norvegicus (Rat).